Reading from the N-terminus, the 76-residue chain is Lividin-2 (76 aa).

Positions 1–22 (MFTLKKSLLLLFFLGTISLSLC) are cleaved as a signal peptide. A propeptide spanning residues 23–41 (QEERNADEEDGGEVTEEEV) is cleaved from the precursor. Cys70 and Cys76 are oxidised to a cystine.

In terms of tissue distribution, expressed by the skin glands.

It localises to the secreted. Functionally, antimicrobial peptide. This is Lividin-2 from Odorrana livida (Green mountain frog).